A 370-amino-acid chain; its full sequence is tRNA pseudouridine synthase D (370 aa).

The Nucleophile role is filled by Asp77. Residues 152-297 enclose the TRUD domain; the sequence is GVPNYFGEQR…LEQERRPLLL (146 aa).

Belongs to the pseudouridine synthase TruD family.

The catalysed reaction is uridine(13) in tRNA = pseudouridine(13) in tRNA. Functionally, responsible for synthesis of pseudouridine from uracil-13 in transfer RNAs. The chain is tRNA pseudouridine synthase D from Shewanella oneidensis (strain ATCC 700550 / JCM 31522 / CIP 106686 / LMG 19005 / NCIMB 14063 / MR-1).